Here is a 623-residue protein sequence, read N- to C-terminus: Riboflavin biosynthesis protein PYRR, chloroplastic (623 aa).

The N-terminal 45 residues, 1–45 (MPLPQPLLGGASPAPARAASSFLHPLLHTRHRVSTAPAAASSFVP), are a transit peptide targeting the chloroplast. The 130-residue stretch at 52-181 (ANDAMLLRRA…ALRNEGIQVD (130 aa)) folds into the CMP/dCMP-type deaminase domain.

It in the C-terminal section; belongs to the YbiA family.

Its subcellular location is the plastid. It localises to the chloroplast. It catalyses the reaction 5-amino-6-(5-phospho-D-ribitylamino)uracil + NADP(+) = 5-amino-6-(5-phospho-D-ribosylamino)uracil + NADPH + H(+). It carries out the reaction 2,5-diamino-6-hydroxy-4-(5-phosphoribosylamino)-pyrimidine + H2O = 2,5,6-triamino-4-hydroxypyrimidine + D-ribose 5-phosphate. The catalysed reaction is 5-amino-6-(5-phospho-D-ribosylamino)uracil + H2O = 5,6-diaminouracil + D-ribose 5-phosphate. The protein operates within cofactor biosynthesis; riboflavin biosynthesis; 5-amino-6-(D-ribitylamino)uracil from GTP: step 3/4. Its function is as follows. Pyrimidine reductase involved in the riboflavin biosynthesis pathway. Also has a non-functional N-terminal deaminase domain that lacks the catalytically essential zinc-binding residues. 39% activity when NADH replaces NADPH. No evidence for a phosphatase activity conferred by the N-terminal domain. In terms of biological role, catalyzes the hydrolysis of the N-glycosidic bond in the first two intermediates of riboflavin biosynthesis, which are highly reactive metabolites, yielding relatively innocuous products. Thus, can divert a surplus of harmful intermediates into relatively harmless products and pre-empt the damage these intermediates would otherwise do. Has no activity against GTP, nucleoside monophosphates or ADP-ribose. The polypeptide is Riboflavin biosynthesis protein PYRR, chloroplastic (PYRR) (Zea mays (Maize)).